Here is a 206-residue protein sequence, read N- to C-terminus: MMPHQLSLVVGLGNPGSKYDGTRHNIGFMALERLARREGFSFRQQAKLHGLSADKGFGDQRLRLLMPQTFMNDSGRSVRAALDWYGFQPEEIVLLVDDMDLPLGRLRLRAQGSAGGHNGLRSTIQHLGTQVFPRLRIGIGAPAENPAERRARTVSHVLGPFSRAEQPCVDAVLDAVLDGLDRLKTQGMERAGTWINGFRYESPSAT.

Y19 lines the tRNA pocket. H24 functions as the Proton acceptor in the catalytic mechanism. Residues F70, N72, and N118 each coordinate tRNA.

The protein belongs to the PTH family. As to quaternary structure, monomer.

It is found in the cytoplasm. The enzyme catalyses an N-acyl-L-alpha-aminoacyl-tRNA + H2O = an N-acyl-L-amino acid + a tRNA + H(+). Functionally, hydrolyzes ribosome-free peptidyl-tRNAs (with 1 or more amino acids incorporated), which drop off the ribosome during protein synthesis, or as a result of ribosome stalling. In terms of biological role, catalyzes the release of premature peptidyl moieties from peptidyl-tRNA molecules trapped in stalled 50S ribosomal subunits, and thus maintains levels of free tRNAs and 50S ribosomes. The polypeptide is Peptidyl-tRNA hydrolase (Synechococcus sp. (strain CC9902)).